Reading from the N-terminus, the 95-residue chain is Putative septation protein SpoVG (95 aa).

It belongs to the SpoVG family.

Could be involved in septation. The protein is Putative septation protein SpoVG of Clostridium botulinum (strain ATCC 19397 / Type A).